A 240-amino-acid chain; its full sequence is Octanoyltransferase (240 aa).

The BPL/LPL catalytic domain maps to 49-233 (HQAEELVWLL…AFESVFGATR (185 aa)). Substrate is bound by residues 87–94 (RGGQVTYH), 162–164 (AIG), and 175–177 (GIA). Cys193 serves as the catalytic Acyl-thioester intermediate.

This sequence belongs to the LipB family.

It is found in the cytoplasm. The catalysed reaction is octanoyl-[ACP] + L-lysyl-[protein] = N(6)-octanoyl-L-lysyl-[protein] + holo-[ACP] + H(+). Its pathway is protein modification; protein lipoylation via endogenous pathway; protein N(6)-(lipoyl)lysine from octanoyl-[acyl-carrier-protein]: step 1/2. Catalyzes the transfer of endogenously produced octanoic acid from octanoyl-acyl-carrier-protein onto the lipoyl domains of lipoate-dependent enzymes. Lipoyl-ACP can also act as a substrate although octanoyl-ACP is likely to be the physiological substrate. The sequence is that of Octanoyltransferase from Bradyrhizobium sp. (strain ORS 278).